The following is a 330-amino-acid chain: tRNA U34 carboxymethyltransferase (330 aa).

Carboxy-S-adenosyl-L-methionine contacts are provided by residues Lys-91, Trp-105, Lys-110, Gly-130, 152–154 (DPS), 181–182 (IE), Met-196, Tyr-200, and Arg-315.

This sequence belongs to the class I-like SAM-binding methyltransferase superfamily. CmoB family. In terms of assembly, homotetramer.

It carries out the reaction carboxy-S-adenosyl-L-methionine + 5-hydroxyuridine(34) in tRNA = 5-carboxymethoxyuridine(34) in tRNA + S-adenosyl-L-homocysteine + H(+). Functionally, catalyzes carboxymethyl transfer from carboxy-S-adenosyl-L-methionine (Cx-SAM) to 5-hydroxyuridine (ho5U) to form 5-carboxymethoxyuridine (cmo5U) at position 34 in tRNAs. This chain is tRNA U34 carboxymethyltransferase, found in Shewanella sp. (strain ANA-3).